The sequence spans 292 residues: 4-hydroxy-tetrahydrodipicolinate synthase (292 aa).

T45 contributes to the pyruvate binding site. The active-site Proton donor/acceptor is Y133. K161 acts as the Schiff-base intermediate with substrate in catalysis. Residue I203 coordinates pyruvate.

This sequence belongs to the DapA family. In terms of assembly, homotetramer; dimer of dimers.

It localises to the cytoplasm. The enzyme catalyses L-aspartate 4-semialdehyde + pyruvate = (2S,4S)-4-hydroxy-2,3,4,5-tetrahydrodipicolinate + H2O + H(+). It functions in the pathway amino-acid biosynthesis; L-lysine biosynthesis via DAP pathway; (S)-tetrahydrodipicolinate from L-aspartate: step 3/4. Its function is as follows. Catalyzes the condensation of (S)-aspartate-beta-semialdehyde [(S)-ASA] and pyruvate to 4-hydroxy-tetrahydrodipicolinate (HTPA). In Azoarcus sp. (strain BH72), this protein is 4-hydroxy-tetrahydrodipicolinate synthase.